The primary structure comprises 775 residues: uncharacterized protein (775 aa).

5 consecutive transmembrane segments (helical) span residues 16–36 (KLLI…GVFL), 585–605 (PYIL…VFPL), 625–645 (VMML…LLGI), 655–675 (FYVF…FLAT), and 742–762 (GVLI…FTML).

The protein to L.lactis phage infection protein (PIP).

It is found in the cell membrane. This is an uncharacterized protein from Bacillus subtilis (strain 168).